Reading from the N-terminus, the 545-residue chain is 4-coumarate--CoA ligase 2 (545 aa).

Residues Ser192, Ser193, Gly194, Thr195, Thr196, and Lys200 each coordinate ATP. (E)-4-coumaroyl-AMP-binding residues include Tyr242 and Ser246. Lys263 is a CoA binding site. Positions 265–334 (DIAQFLELIP…AKFPNAKLGQ (70 aa)) are SBD1. (E)-4-coumaroyl-AMP contacts are provided by Ala312, Gln334, Gly335, Thr339, and Met347. Residues Gln334, Gly335, and Thr339 each coordinate ATP. An SBD2 region spans residues 335-402 (GYGMTEAGPV…IRGDQIMKGY (68 aa)). The ATP site is built by Asp423 and Arg438. (E)-4-coumaroyl-AMP is bound by residues Lys440 and Lys444. The CoA site is built by Lys446 and Gly447. Lys529 serves as a coordination point for ATP.

The protein belongs to the ATP-dependent AMP-binding enzyme family. The cofactor is Mg(2+).

It catalyses the reaction (E)-4-coumarate + ATP + CoA = (E)-4-coumaroyl-CoA + AMP + diphosphate. The catalysed reaction is (E)-4-coumarate + ATP + H(+) = (E)-4-coumaroyl-AMP + diphosphate. It carries out the reaction (E)-4-coumaroyl-AMP + CoA = (E)-4-coumaroyl-CoA + AMP + H(+). It functions in the pathway phytoalexin biosynthesis; 3,4',5-trihydroxystilbene biosynthesis; 3,4',5-trihydroxystilbene from trans-4-coumarate: step 1/2. Carboxylate--CoA ligase that may use 4-coumarate as substrate. Follows a two-step reaction mechanism, wherein the carboxylate substrate first undergoes adenylation by ATP, followed by a thioesterification in the presence of CoA to yield the final CoA thioester. In Solanum tuberosum (Potato), this protein is 4-coumarate--CoA ligase 2 (4CL2).